The chain runs to 480 residues: MITPLWFHVTQQPDGTYFNFIEIAVRLNGTLVNGISQTLLVPAKLWEHTGLGKIYVVGSMENKLDVDFCAVRYSDILGGFCMEVSNPHDEPLTFNHEVQRFILFSPQIYPISYQFQVLRPPSVSFPKCKANVSSDIIVHSLSDTYVFIKIQFNGITWEDPKKFDLPTGPLSGPFWMSYPVAVLNLPRKLYALHHYLLSRHTDTCDSENCYYTNYIVSRSCFHKRTLYLILTGIGTSKNACYAKDLLFCGIFSTSHVPEGDDIPQLDPAYNVHGESLLRDTLPIINPSAHCNTFQTFTHDTVALFAPDEWHSSLLNVAVWRPGKILTLPGTFVQNLPTDHKPIIPVGDAVFLVTQQLYAGHPNHIPARKIRALVSKTYLILFPLNLTFRLDELNPICFSEKPQSKLTLPQIDKHPSFDQDFLKNFSIDEMQLISQFFDSLRKMYTSNYVRTLTKRFHGNWNRWPSCRNHQFNQLLCAFYSF.

This Elephas maximus (Indian elephant) protein is Protein U54.